The primary structure comprises 676 residues: Protein timeless (676 aa).

Residues 77–108 (VNTLQKLLNLWFEASLSESSEDNESNTSPPKK) form a necessary for normal circadian rhythm region. 2 disordered regions span residues 94–145 (ESSE…CDER) and 346–398 (PESI…LVKR). 2 stretches are compositionally biased toward low complexity: residues 101–129 (SNTSPPKKGSGDSSPMLTSDPTSDSSDNG) and 360–369 (QGKPQHQKPP). The short motif at 388 to 398 (KELRRKKLVKR) is the Nuclear localization signal element.

This sequence belongs to the timeless family. As to quaternary structure, forms a heterodimer with period (PER); the complex then translocates into the nucleus. Phosphorylated with a circadian rhythmicity.

Its subcellular location is the nucleus. It localises to the cytoplasm. It is found in the perinuclear region. Its function is as follows. Required for the production of circadian rhythms. The biological cycle depends on the rhythmic formation and nuclear localization of the TIM-PER complex. Light induces the degradation of TIM, which promotes elimination of PER. Nuclear activity of the heterodimer coordinatively regulates PER and TIM transcription through a negative feedback loop. Behaves as a negative element in circadian transcriptional loop. Does not appear to bind DNA, suggesting indirect transcriptional inhibition. This chain is Protein timeless (tim), found in Drosophila hydei (Fruit fly).